The following is a 312-amino-acid chain: Ribosomal RNA small subunit methyltransferase H (312 aa).

Residues 1 to 24 (MNIMTANQGAVSPSQTESEASPPT) are disordered. Residues 55 to 57 (AGH), D72, Y96, D117, and Q124 each bind S-adenosyl-L-methionine. Residues 288 to 312 (EQVDNPRARSAKLRVGERAAAPEGS) form a disordered region.

It belongs to the methyltransferase superfamily. RsmH family.

Its subcellular location is the cytoplasm. It catalyses the reaction cytidine(1402) in 16S rRNA + S-adenosyl-L-methionine = N(4)-methylcytidine(1402) in 16S rRNA + S-adenosyl-L-homocysteine + H(+). Its function is as follows. Specifically methylates the N4 position of cytidine in position 1402 (C1402) of 16S rRNA. The chain is Ribosomal RNA small subunit methyltransferase H from Deinococcus radiodurans (strain ATCC 13939 / DSM 20539 / JCM 16871 / CCUG 27074 / LMG 4051 / NBRC 15346 / NCIMB 9279 / VKM B-1422 / R1).